A 412-amino-acid polypeptide reads, in one-letter code: Peptidase T (412 aa).

Residue His-84 participates in Zn(2+) binding. Asp-86 is a catalytic residue. Asp-146 provides a ligand contact to Zn(2+). The Proton acceptor role is filled by Glu-179. Positions 180, 202, and 385 each coordinate Zn(2+).

It belongs to the peptidase M20B family. The cofactor is Zn(2+).

Its subcellular location is the cytoplasm. The enzyme catalyses Release of the N-terminal residue from a tripeptide.. Functionally, cleaves the N-terminal amino acid of tripeptides. The polypeptide is Peptidase T (Haemophilus influenzae (strain PittGG)).